The chain runs to 115 residues: Ribosomal protein uS4-like (115 aa).

Belongs to the universal ribosomal protein uS4 family.

The chain is Ribosomal protein uS4-like from Azoarcus sp. (strain BH72).